The sequence spans 469 residues: Acetyl-CoA decarbonylase/synthase complex subunit beta 1 (469 aa).

[Ni-Fe-S] cluster-binding residues include Cys189, Cys192, Cys278, and Cys280.

It belongs to the CdhC family. Monomer. The ACDS complex is made up of alpha, epsilon, beta, gamma and delta chains with a probable stoichiometry of (alpha(2)epsilon(2))(4)-beta(8)-(gamma(1)delta(1))(8) (Potential). Requires [Ni-Fe-S] cluster as cofactor.

The enzyme catalyses Co(I)-[corrinoid Fe-S protein] + acetyl-CoA + H(+) = methyl-Co(III)-[corrinoid Fe-S protein] + CO + CoA. It participates in one-carbon metabolism; methanogenesis from acetate. Its function is as follows. Part of a complex that catalyzes the reversible cleavage of acetyl-CoA, allowing growth on acetate as sole source of carbon and energy. The alpha-epsilon complex generates CO from CO(2), while the beta subunit (this protein) combines the CO with CoA and a methyl group to form acetyl-CoA. The methyl group, which is incorporated into acetyl-CoA, is transferred to the beta subunit by a corrinoid iron-sulfur protein (the gamma-delta complex). The sequence is that of Acetyl-CoA decarbonylase/synthase complex subunit beta 1 (cdhC1) from Methanosarcina acetivorans (strain ATCC 35395 / DSM 2834 / JCM 12185 / C2A).